Reading from the N-terminus, the 75-residue chain is uncharacterized protein (75 aa).

This is an uncharacterized protein from Mycobacterium tuberculosis (strain CDC 1551 / Oshkosh).